We begin with the raw amino-acid sequence, 266 residues long: Family of serine hydrolases 3 (266 aa).

Catalysis depends on charge relay system residues Ser-117, Asp-180, and His-209.

The protein belongs to the AB hydrolase 3 family.

Its function is as follows. Serine hydrolase of unknown specificity. This chain is Family of serine hydrolases 3 (FSH3), found in Saccharomyces cerevisiae (strain ATCC 204508 / S288c) (Baker's yeast).